Consider the following 309-residue polypeptide: Aspartate carbamoyltransferase catalytic subunit (309 aa).

Positions 57 and 58 each coordinate carbamoyl phosphate. Residue Lys86 participates in L-aspartate binding. Carbamoyl phosphate contacts are provided by Arg107, His135, and Gln138. L-aspartate contacts are provided by Arg168 and Arg228. 2 residues coordinate carbamoyl phosphate: Leu267 and Pro268.

Belongs to the aspartate/ornithine carbamoyltransferase superfamily. ATCase family. In terms of assembly, heterooligomer of catalytic and regulatory chains.

It catalyses the reaction carbamoyl phosphate + L-aspartate = N-carbamoyl-L-aspartate + phosphate + H(+). Its pathway is pyrimidine metabolism; UMP biosynthesis via de novo pathway; (S)-dihydroorotate from bicarbonate: step 2/3. Catalyzes the condensation of carbamoyl phosphate and aspartate to form carbamoyl aspartate and inorganic phosphate, the committed step in the de novo pyrimidine nucleotide biosynthesis pathway. In Nitrosopumilus maritimus (strain SCM1), this protein is Aspartate carbamoyltransferase catalytic subunit.